A 480-amino-acid chain; its full sequence is uncharacterized protein (480 aa).

Residues 1-20 (MDVKDTGINRSDTPISDQDH) form a disordered region.

This is an uncharacterized protein from Arabidopsis thaliana (Mouse-ear cress).